Reading from the N-terminus, the 253-residue chain is Chromosome-partitioning ATPase Soj (253 aa).

Residues Lys-11, Gly-12, Gly-13, Val-14, Gly-15, Lys-16, Thr-17, Thr-18, Pro-211, and Asn-213 each coordinate ATP. Thr-17 is a Mg(2+) binding site.

The protein belongs to the ParA family.

The enzyme catalyses ATP + H2O = ADP + phosphate + H(+). Functionally, ATPase probably involved in chromosome partitioning. Cooperatively binds dsDNA, forming nucleoprotein filaments in a strictly ATP-dependent fashion. The protein is Chromosome-partitioning ATPase Soj of Treponema pallidum (strain Nichols).